Reading from the N-terminus, the 484-residue chain is Probable glycine dehydrogenase (decarboxylating) subunit 2 (484 aa).

Lys-264 is modified (N6-(pyridoxal phosphate)lysine).

The protein belongs to the GcvP family. C-terminal subunit subfamily. In terms of assembly, the glycine cleavage system is composed of four proteins: P, T, L and H. In this organism, the P 'protein' is a heterodimer of two subunits. The cofactor is pyridoxal 5'-phosphate.

The catalysed reaction is N(6)-[(R)-lipoyl]-L-lysyl-[glycine-cleavage complex H protein] + glycine + H(+) = N(6)-[(R)-S(8)-aminomethyldihydrolipoyl]-L-lysyl-[glycine-cleavage complex H protein] + CO2. The glycine cleavage system catalyzes the degradation of glycine. The P protein binds the alpha-amino group of glycine through its pyridoxal phosphate cofactor; CO(2) is released and the remaining methylamine moiety is then transferred to the lipoamide cofactor of the H protein. The sequence is that of Probable glycine dehydrogenase (decarboxylating) subunit 2 from Legionella pneumophila (strain Corby).